Here is a 671-residue protein sequence, read N- to C-terminus: Annexin A6 (671 aa).

8 Annexin repeats span residues 18 to 89 (FNAS…SLMR), 90 to 161 (PPAY…VLLQ), 173 to 245 (DLVE…AVVK), 249 to 320 (STAE…KLCE), 361 to 432 (FNDD…GLML), 433 to 504 (TPAQ…SLAL), 519 to 594 (EDAK…AIVR), and 598 to 669 (NKPA…LCGG).

It belongs to the annexin family.

It localises to the cytoplasm. The protein localises to the melanosome. May associate with CD21. May regulate the release of Ca(2+) from intracellular stores. The polypeptide is Annexin A6 (ANXA6) (Gallus gallus (Chicken)).